A 1193-amino-acid chain; its full sequence is Dynamin-like protein A (1193 aa).

Positions 1 to 609 are D1, associates with and fuses membranes, tethers lipsomes; it reads MTDQNRKELL…AFRERVKRLE (609 aa). The segment at 50-57 is G1 motif D1; that stretch reads GHYSAGKS. Positions 76-78 are G2 motif D1; it reads TSA. The segment at 141 to 144 is G3 motif D1; sequence DTPG. Positions 199–202 are G4 motif D1; it reads NQID. Positions 561–1193 are D2, does not associate with membranes; sequence MPKSEIKMEQ…WKNSDNTIKM (633 aa). The G1 motif D2 stretch occupies residues 619 to 626; sequence GGFSSGKS. The segment at 645-647 is G2 motif D2; that stretch reads TTA. The interval 774-777 is G3 motif D2; sequence DTPG. Positions 837–840 are G4 motif D2; the sequence is NAAD.

The protein belongs to the TRAFAC class dynamin-like GTPase superfamily. Dynamin/Fzo/YdjA family. In terms of assembly, homodimer in solution. Both D1 and D2 domains interact with YwpG, YneK interacts only with D1 while RNase Y (rny) only interacts with whole protein. Probably oligomerizes at damaged membrane sites. Mg(2+) serves as cofactor.

It localises to the cell membrane. It carries out the reaction GTP + H2O = GDP + phosphate + H(+). Mediates lipid mixing of vesicles and full mixing of their contents in the absence and presence of GTP. Tethers and mixes small vesicles better than larger ones, indicating a curvature preference. GTP slows down DynA-mediated lipid fusion, perhaps controlling its activity. Prefers phospholipid composition close to the B.subtilis membrane; requires phosphatidylglycerol for fusion has no activity on pure phosphatidylethanolamine vesicles. Regulates membrane lipid diffusion. Required to prevent membrane damage when exposed to low levels of membrane-damaging antibiotics or to bacteriophage. Probably surveys the cell membrane for stress; localizes to sites of membrane damage (treatment with nisin) and forms foci in cells treated with pore-forming compounds (CCCP). May assist membrane repair, possibly by membrane tethering and fusion. Probably functions both in early and late cell division, affects the proper formation of the FtsZ ring. Plays a non-redundant role with flottilin (floT) in membrane dynamics and cell shape. Probably able to bend membranes. Tethers liposomes and mediates their fusion; this does not require GTPase activity or the presence of GTP. Both GTPase domains (dynamin-type G) are required for GTPase activity. Its function is as follows. Has intrinsic affinity for membranes and membrane distortion capability; causes tubulation and membrane distortion when expressed in a Drosophila cell line. This is Dynamin-like protein A from Bacillus subtilis (strain 168).